A 358-amino-acid polypeptide reads, in one-letter code: Phosphate acyltransferase (358 aa).

The interval 336–358 is disordered; it reads SAAGAAPASPETAPTPHPSTRAA.

It belongs to the PlsX family. In terms of assembly, homodimer. Probably interacts with PlsY.

Its subcellular location is the cytoplasm. It catalyses the reaction a fatty acyl-[ACP] + phosphate = an acyl phosphate + holo-[ACP]. It participates in lipid metabolism; phospholipid metabolism. Catalyzes the reversible formation of acyl-phosphate (acyl-PO(4)) from acyl-[acyl-carrier-protein] (acyl-ACP). This enzyme utilizes acyl-ACP as fatty acyl donor, but not acyl-CoA. The sequence is that of Phosphate acyltransferase from Cupriavidus pinatubonensis (strain JMP 134 / LMG 1197) (Cupriavidus necator (strain JMP 134)).